The sequence spans 190 residues: Vespryn-21 (190 aa).

A signal peptide spans 1 to 20 (MLLFTLCFFADLENGGKALA). Positions 21 to 127 (SPPGKWQKAD…LIWQRGLWFL (107 aa)) constitute a B30.2/SPRY domain. A propeptide spanning residues 128-190 (QRLETDSDKL…LGGGVSLTNL (63 aa)) is cleaved from the precursor.

This sequence belongs to the ohanin/vespryn family. Expressed by the venom gland.

It localises to the secreted. Its function is as follows. Neurotoxin that produces dose-dependent hypolocomotion and hyperalgesia in mice. May directly act on the central nervous system, as it is 6500-fold more potent when administered intracerebroventricularly than intraperitoneal. This is Vespryn-21 from Drysdalia coronoides (White-lipped snake).